We begin with the raw amino-acid sequence, 1062 residues long: MNRFTAYAALFFMFSLCSTAKEAGFLHPAFNFRGTSTMSASSGDYSAAPTPLYKSWALPSSLNLTTQPPPPLTDRSYYELVQALTSKMRLDCQTVGDMTWRHLSEMLFASWNSVKEVSLKAASVTLWAIINIWFGLYWTLARLITLFLWTFSIEALCLILLGCITSLIYKGALSLSEHLPVFLFMSPLKIIWRAAFSKRNYKNERAVEGYKGFSVPQKPPKSAVIELQHENGSHLGYANCIRLYSGENALVTAEHCLEGAFATSLKTGNRIPMSTFFPIFKSARNDISILVGPPNWEGLLSVKGAHFITADKIGKGPASFYTLEKGEWMCHSATIDGAHHQFVSVLCNTGPGYSGTGFWSSKNLLGVLKGFPLEEECNYNVMSVIPSIPGITSPNYVFESTAVKGRVFSDEAVKELEREASEAVKKLARFKSLTDKNWADDYDSDEDYGLEREAATNAPAEKTAQTNSAEKTAPSTSAEKTALTNKPFKWASGTVRQNKRQLRHPRRRYKRTTNGQNGRTDHHSYGGENQSLGDRGEDSEQGVSESPAEAQTKEARKAWREEQAKQFTSYFNAIYKWGAQEGGCPPGFRKCGHIPRYYHPRTRGETQWGQKLCQVHPELADKTAGFGWPKAGSEAELQSLNLQAARWLQRAESATIPGAEARKRVIEKTVEAYRNCVTNAPLCSLKSKLDWAGFQQDIREAVQSLELDAGVGIPYIAYGLPAHRGWVEDHKLLPVLTQLTFDRLQKMSEASFEDMSAEELVQEGLCDPIRLFVKGEPHKQSKLDEGRYRLIMSVSLVDQLVARVLFQNQNKREISLWRSVPSKPGFGLSTDTQTAEFLECLQKVSGAPSVEELCANHKEYTRPTDCSGFDWSVAYWMLEDDMEVRNRLTFNNTQLTKRLRAAWLKCIGNSVLCLSDGTLLAQTVPGVQKSGSYNTSSSNSRIRVMAAYHCGADWAMAMGDDALEAPNSDLEEYKTLGFKVEVGRELEFCSHIFRNPTLAVPVNTNKMLYKLIHGYNPECGNPEVIQNYLAAVFSVLQELRHDRELVAKLHQWLVPSATTKEH.

A signal peptide spans 1–20; sequence MNRFTAYAALFFMFSLCSTA. Helical transmembrane passes span 121–141, 144–164, and 172–192; these read AASV…WTLA, ITLF…LGCI, and ALSL…KIIW. Residues 207–399 form the Peptidase S39 domain; it reads VEGYKGFSVP…GITSPNYVFE (193 aa). Active-site for protease activity residues include His-255, Asp-286, and Ser-354. Positions 455-560 are disordered; the sequence is ATNAPAEKTA…QTKEARKAWR (106 aa). The segment covering 463–484 has biased composition (polar residues); it reads TAQTNSAEKTAPSTSAEKTALT. Residues 497–511 show a composition bias toward basic residues; that stretch reads QNKRQLRHPRRRYKR. Over residues 551–560 the composition is skewed to basic and acidic residues; that stretch reads QTKEARKAWR. The RdRp catalytic domain maps to 859–974; sequence EYTRPTDCSG…APNSDLEEYK (116 aa).

In terms of processing, specific enzymatic cleavages in vivo yield mature proteins. The protease probably cleaves itself and releases the RdRp (Potential). Cleavages have been shown in the P1 protein, but since the N-terminus containing the serine protease is shared between P1 and P1-P2, cleavages should also occur within the P1-P2 protein.

Its subcellular location is the membrane. The enzyme catalyses RNA(n) + a ribonucleoside 5'-triphosphate = RNA(n+1) + diphosphate. Its function is as follows. Precursor from which the RNA-dependent RNA polymerase (RdRp) is probably released. RNA-dependent RNA polymerase plays an essential role in virus replication (Potential). In Potato leafroll virus (strain Potato/Scotland/strain 1/1984) (PLrV), this protein is Protein P1-P2.